The chain runs to 540 residues: Chaperonin GroEL (540 aa).

ATP contacts are provided by residues 29–32 (TLGP), 86–90 (DGTTT), Gly413, and Asp495.

This sequence belongs to the chaperonin (HSP60) family. Forms a cylinder of 14 subunits composed of two heptameric rings stacked back-to-back. Interacts with the co-chaperonin GroES.

Its subcellular location is the cytoplasm. The catalysed reaction is ATP + H2O + a folded polypeptide = ADP + phosphate + an unfolded polypeptide.. Functionally, together with its co-chaperonin GroES, plays an essential role in assisting protein folding. The GroEL-GroES system forms a nano-cage that allows encapsulation of the non-native substrate proteins and provides a physical environment optimized to promote and accelerate protein folding. The protein is Chaperonin GroEL of Caldanaerobacter subterraneus subsp. tengcongensis (strain DSM 15242 / JCM 11007 / NBRC 100824 / MB4) (Thermoanaerobacter tengcongensis).